Here is a 254-residue protein sequence, read N- to C-terminus: 5-oxoprolinase subunit A (254 aa).

The protein belongs to the LamB/PxpA family. Forms a complex composed of PxpA, PxpB and PxpC.

It catalyses the reaction 5-oxo-L-proline + ATP + 2 H2O = L-glutamate + ADP + phosphate + H(+). In terms of biological role, catalyzes the cleavage of 5-oxoproline to form L-glutamate coupled to the hydrolysis of ATP to ADP and inorganic phosphate. This is 5-oxoprolinase subunit A from Carboxydothermus hydrogenoformans (strain ATCC BAA-161 / DSM 6008 / Z-2901).